The primary structure comprises 66 residues: DNA-directed RNA polymerase subunit Rpo10 (66 aa).

Zn(2+) is bound by residues C7, C10, C47, and C48.

It belongs to the archaeal Rpo10/eukaryotic RPB10 RNA polymerase subunit family. In terms of assembly, part of the RNA polymerase complex. Zn(2+) is required as a cofactor.

Its subcellular location is the cytoplasm. The enzyme catalyses RNA(n) + a ribonucleoside 5'-triphosphate = RNA(n+1) + diphosphate. Functionally, DNA-dependent RNA polymerase (RNAP) catalyzes the transcription of DNA into RNA using the four ribonucleoside triphosphates as substrates. In Halobacterium salinarum (strain ATCC 29341 / DSM 671 / R1), this protein is DNA-directed RNA polymerase subunit Rpo10.